Consider the following 505-residue polypeptide: 2,3-bisphosphoglycerate-independent phosphoglycerate mutase (505 aa).

Mn(2+) is bound by residues Asp-13 and Ser-63. The active-site Phosphoserine intermediate is Ser-63. Substrate is bound by residues His-124, 153–154 (RD), Arg-183, Arg-189, 254–257 (RADR), and Lys-330. Mn(2+) is bound by residues Asp-396, His-400, Asp-437, His-438, and His-456.

Belongs to the BPG-independent phosphoglycerate mutase family. As to quaternary structure, monomer. Requires Mn(2+) as cofactor.

The catalysed reaction is (2R)-2-phosphoglycerate = (2R)-3-phosphoglycerate. The protein operates within carbohydrate degradation; glycolysis; pyruvate from D-glyceraldehyde 3-phosphate: step 3/5. Catalyzes the interconversion of 2-phosphoglycerate and 3-phosphoglycerate. The polypeptide is 2,3-bisphosphoglycerate-independent phosphoglycerate mutase (Ruegeria pomeroyi (strain ATCC 700808 / DSM 15171 / DSS-3) (Silicibacter pomeroyi)).